A 542-amino-acid chain; its full sequence is Exopolysaccharide phosphotransferase CpsY (542 aa).

The disordered stretch occupies residues 522–542 (SPTVSAPLEDGQTANPAQTAR). The span at 533–542 (QTANPAQTAR) shows a compositional bias: polar residues.

This sequence belongs to the stealth family.

In Mycobacterium leprae (strain TN), this protein is Exopolysaccharide phosphotransferase CpsY (cpsY).